The sequence spans 495 residues: Tubulin epsilon and delta complex protein 1 (495 aa).

Residues 355-387 (GGELDLVVRELQALEEELREAAERRRAAWEAKA) are a coiled coil. Residues 417–440 (CWERDGGPAQPHGPHRLVRREDGA) form a disordered region. Residues 452–480 (IRTLRSQEACLEAVLRRLQGQCRQELARL) adopt a coiled-coil conformation.

Interacts with TEDC2. Found in a complex with TEDC1, TEDC2, TUBE1 and TUBD1.

It is found in the cell projection. It localises to the cilium. The protein resides in the cytoplasm. The protein localises to the cytoskeleton. Its subcellular location is the microtubule organizing center. It is found in the centrosome. It localises to the centriole. Functionally, acts as a positive regulator of ciliary hedgehog signaling. Required for centriole stability. May play a role in counteracting perturbation of actin filaments, such as after treatment with the actin depolymerizing microbial metabolite Chivosazole F. This chain is Tubulin epsilon and delta complex protein 1, found in Homo sapiens (Human).